A 587-amino-acid chain; its full sequence is Formate--tetrahydrofolate ligase (587 aa).

73–80 (TPLGEGKS) provides a ligand contact to ATP.

The protein belongs to the formate--tetrahydrofolate ligase family.

The enzyme catalyses (6S)-5,6,7,8-tetrahydrofolate + formate + ATP = (6R)-10-formyltetrahydrofolate + ADP + phosphate. The protein operates within one-carbon metabolism; tetrahydrofolate interconversion. This Syntrophobacter fumaroxidans (strain DSM 10017 / MPOB) protein is Formate--tetrahydrofolate ligase.